The sequence spans 1917 residues: Diacylglycerol kinase eta (1917 aa).

Over residues 1–10 (MSHLKLDTLH) the composition is skewed to basic and acidic residues. A disordered region spans residues 1–37 (MSHLKLDTLHVQRSPRGSRRSSRSSGRSSACSSGSIS). A compositionally biased stretch (low complexity) spans 23–37 (RSSGRSSACSSGSIS). The 94-residue stretch at 82-175 (AIIKEGFLLK…WLGSLKTATA (94 aa)) folds into the PH domain. 2 consecutive Phorbol-ester/DAG-type zinc fingers follow at residues 195 to 245 (HHHW…IANC) and 268 to 319 (PHQW…AVAC). The DAGKc domain maps to 350–486 (GNFSPLLVFV…DRWSIMVFEK (137 aa)). Disordered regions lie at residues 1015–1053 (TTLCSEHAGPPKPPRKKSLSALSRTQAHPRRRNSSPPRI), 1114–1149 (LEQQQRDGDNDTEYPEQQQTPTNKGPNSLATTSEDE), and 1380–1399 (KDKDEKGGKDKDKTPTEETN). Residues 1128–1145 (PEQQQTPTNKGPNSLATT) are compositionally biased toward polar residues. Positions 1854 to 1917 (WSVNEVVTWL…LQAIKDLSEN (64 aa)) constitute an SAM domain.

The protein belongs to the eukaryotic diacylglycerol kinase family.

It localises to the cytoplasm. The catalysed reaction is a 1,2-diacyl-sn-glycerol + ATP = a 1,2-diacyl-sn-glycero-3-phosphate + ADP + H(+). Its function is as follows. Phosphorylates diacylglycerol (DAG) to generate phosphatidic acid (PA). In Drosophila yakuba (Fruit fly), this protein is Diacylglycerol kinase eta.